The sequence spans 635 residues: Threonine--tRNA ligase (635 aa).

One can recognise a TGS domain in the interval 1–61; sequence MVSIRLPDGS…DRDASLAIVT (61 aa). The segment at 242–533 is catalytic; it reads DHRKLGKQLD…LIEHHAGAMP (292 aa). Zn(2+)-binding residues include Cys333, His384, and His510.

This sequence belongs to the class-II aminoacyl-tRNA synthetase family. Homodimer. Zn(2+) is required as a cofactor.

The protein resides in the cytoplasm. It catalyses the reaction tRNA(Thr) + L-threonine + ATP = L-threonyl-tRNA(Thr) + AMP + diphosphate + H(+). Functionally, catalyzes the attachment of threonine to tRNA(Thr) in a two-step reaction: L-threonine is first activated by ATP to form Thr-AMP and then transferred to the acceptor end of tRNA(Thr). Also edits incorrectly charged L-seryl-tRNA(Thr). This is Threonine--tRNA ligase from Burkholderia vietnamiensis (strain G4 / LMG 22486) (Burkholderia cepacia (strain R1808)).